We begin with the raw amino-acid sequence, 320 residues long: Lipoyl synthase (320 aa).

The tract at residues 9-31 (ANDARPRHPEKAHRPDQPIQRKP) is disordered. The span at 12–31 (ARPRHPEKAHRPDQPIQRKP) shows a compositional bias: basic and acidic residues. Positions 60, 65, 71, 86, 90, 93, and 299 each coordinate [4Fe-4S] cluster. One can recognise a Radical SAM core domain in the interval 72–288 (WEKKHATFMI…ETTAYAKGFL (217 aa)).

Belongs to the radical SAM superfamily. Lipoyl synthase family. [4Fe-4S] cluster serves as cofactor.

It localises to the cytoplasm. The enzyme catalyses [[Fe-S] cluster scaffold protein carrying a second [4Fe-4S](2+) cluster] + N(6)-octanoyl-L-lysyl-[protein] + 2 oxidized [2Fe-2S]-[ferredoxin] + 2 S-adenosyl-L-methionine + 4 H(+) = [[Fe-S] cluster scaffold protein] + N(6)-[(R)-dihydrolipoyl]-L-lysyl-[protein] + 4 Fe(3+) + 2 hydrogen sulfide + 2 5'-deoxyadenosine + 2 L-methionine + 2 reduced [2Fe-2S]-[ferredoxin]. It functions in the pathway protein modification; protein lipoylation via endogenous pathway; protein N(6)-(lipoyl)lysine from octanoyl-[acyl-carrier-protein]: step 2/2. In terms of biological role, catalyzes the radical-mediated insertion of two sulfur atoms into the C-6 and C-8 positions of the octanoyl moiety bound to the lipoyl domains of lipoate-dependent enzymes, thereby converting the octanoylated domains into lipoylated derivatives. This Methylobacterium nodulans (strain LMG 21967 / CNCM I-2342 / ORS 2060) protein is Lipoyl synthase.